We begin with the raw amino-acid sequence, 130 residues long: Small ribosomal subunit protein uS8 (130 aa).

Belongs to the universal ribosomal protein uS8 family. In terms of assembly, part of the 30S ribosomal subunit.

One of the primary rRNA binding proteins, it binds directly to 16S rRNA central domain where it helps coordinate assembly of the platform of the 30S subunit. The polypeptide is Small ribosomal subunit protein uS8 (Methanococcus maripaludis (strain C7 / ATCC BAA-1331)).